The sequence spans 507 residues: (6-4) photolyase (507 aa).

6,7-dimethyl-8-(1-D-ribityl)lumazine is bound by residues 9-10, 32-40, and glycine 105; these read GD and CEVMAEASY. FAD-binding positions include 265 to 269 and asparagine 273; that span reads HSLLS. Cysteine 350 is a binding site for [4Fe-4S] cluster. FAD-binding positions include 363–366, aspartate 397, and asparagine 406; that span reads YAHH. [4Fe-4S] cluster contacts are provided by cysteine 438, cysteine 441, and cysteine 454.

The protein belongs to the iron-sulfur bacterial cryptochrome/photolyase (FeS-BCP) family. It depends on FAD as a cofactor. 6,7-dimethyl-8-(1-D-ribityl)lumazine serves as cofactor. The cofactor is [4Fe-4S] cluster.

The enzyme catalyses (6-4) photoproduct (in DNA) = 2 pyrimidine residues (in DNA).. In terms of biological role, photolyase involved in the repair of UV-induced (6-4) lesions in DNA. Catalyzes the photoreactivation of (6-4) pyrimidine-pyrimidone photoproducts by using blue-light energy. Can repair (6-4) photoproducts in ssDNA as well as in dsDNA. This is (6-4) photolyase from Agrobacterium fabrum (strain C58 / ATCC 33970) (Agrobacterium tumefaciens (strain C58)).